A 544-amino-acid polypeptide reads, in one-letter code: Dynein intermediate chain 1 (544 aa).

6 WD repeats span residues lysine 241–serine 281, glycine 289–glutamate 330, serine 342–asparagine 387, valine 402–glutamate 441, threonine 461–valine 501, and proline 506–asparagine 544.

This sequence belongs to the dynein intermediate chain family.

The protein localises to the cytoplasm. Functionally, has a role in meiotic nuclear divsion where it promotes the movement of 'horsetails'. The chain is Dynein intermediate chain 1 (dic1) from Schizosaccharomyces pombe (strain 972 / ATCC 24843) (Fission yeast).